The sequence spans 128 residues: Serum amyloid A-4 protein (128 aa).

The N-terminal stretch at 1–18 is a signal peptide; that stretch reads MKLFIGLIFCSLVMGVSS. Residues 93–128 form a disordered region; sequence SSEREEDQVSNRRAEEWGRSGQDPDHFRPAGLPKKY. A compositionally biased stretch (basic and acidic residues) spans 99–120; it reads DQVSNRRAEEWGRSGQDPDHFR.

The protein belongs to the SAA family. Apolipoprotein of the HDL complex.

It localises to the secreted. Its function is as follows. Major acute phase reactant. This Sus scrofa (Pig) protein is Serum amyloid A-4 protein.